The sequence spans 961 residues: Zinc finger protein basonuclin-1 (961 aa).

A hydrophobic region spans residues 210 to 219 (MTFMLPFQFF). 2 consecutive C2H2-type zinc fingers follow at residues 325–348 (VFCTACEKTFYDKGTLKIHYNAVH) and 353–382 (HKCTIEGCNMVFSSLRSRNRHSANPNPRLH). A disordered region spans residues 370–393 (RNRHSANPNPRLHMPMNRNNRDKD). The Nuclear localization signal motif lies at 501–507 (PKKKSRK). A phosphoserine mark is found at serine 505 and serine 509. Residues 523–572 (EEKRHSLSSDDEVPLQVVSEDEPEDSSPRSDRVPEEQHTQLSLEEPLPQG) form a disordered region. Residues 531-547 (SDDEVPLQVVSEDEPED) show a composition bias toward acidic residues. Over residues 548-560 (SSPRSDRVPEEQH) the composition is skewed to basic and acidic residues. C2H2-type zinc fingers lie at residues 687–711 (FQCDICKKTFKNACSMKTHEKNTHA) and 715–743 (HACTVEGCGAAFPSRRSRDRHSSNLSLHQ). Residues 810–864 (ESYNSGPPSEGTILDLSTTSSMKSESSSHSSWDSDGVSEEGTALMEDSDGNCEGQ) form a disordered region. Over residues 826–844 (STTSSMKSESSSHSSWDSD) the composition is skewed to low complexity. C2H2-type zinc fingers lie at residues 895 to 918 (ITCHLCQKIYSNKGTFRAHYKTVH) and 923 to 950 (HKCKVPGCNTMFSSVRSRNRHSQNPNLH). Residues 937-961 (VRSRNRHSQNPNLHKSLASSPSHLQ) form a disordered region.

In terms of assembly, interacts with HSF2BP (via C-terminus). Post-translationally, phosphorylation on Ser-505 and Ser-509 leads to cytoplasmic localization. Epidermis and germ cells of testis and ovary.

Its subcellular location is the nucleus. The protein resides in the cytoplasm. It localises to the nucleoplasm. Functionally, transcriptional activator. It is likely involved in the regulation of keratinocytes terminal differentiation in squamous epithelia and hair follicles. Required for the maintenance of spermatogenesis. It is involved in the positive regulation of oocyte maturation, probably acting through the control of BMP15 levels and regulation of AKT signaling cascade. May also play a role in the early development of embryos. The sequence is that of Zinc finger protein basonuclin-1 (Bnc1) from Mus musculus (Mouse).